Here is a 494-residue protein sequence, read N- to C-terminus: V-type proton ATPase subunit B (494 aa).

Position 384 (Arg384) interacts with ATP.

Belongs to the ATPase alpha/beta chains family. V-ATPase is a heteromultimeric enzyme made up of two complexes: the ATP-hydrolytic V1 complex and the proton translocation V0 complex. The V1 complex consists of three catalytic AB heterodimers that form a heterohexamer, three peripheral stalks each consisting of EG heterodimers, one central rotor including subunits D and F, and the regulatory subunits C and H. The proton translocation complex V0 consists of the proton transport subunit a, a ring of proteolipid subunits c9c'', rotary subunit d, subunits e and f, and the accessory subunits VhaAC45 and ATP6AP2.

Functionally, non-catalytic subunit of the V1 complex of vacuolar(H+)-ATPase (V-ATPase), a multisubunit enzyme composed of a peripheral complex (V1) that hydrolyzes ATP and a membrane integral complex (V0) that translocates protons. V-ATPase is responsible for acidifying and maintaining the pH of intracellular compartments and in some cell types, is targeted to the plasma membrane, where it is responsible for acidifying the extracellular environment. Essential for the proper assembly and activity of V-ATPase. The polypeptide is V-type proton ATPase subunit B (VHA55) (Heliothis virescens (Tobacco budworm moth)).